Consider the following 197-residue polypeptide: dITP/XTP pyrophosphatase (197 aa).

Position 8–13 (Thr-8–Lys-13) interacts with substrate. Mg(2+) is bound by residues Glu-40 and Asp-69. Residue Asp-69 is the Proton acceptor of the active site. Substrate contacts are provided by residues Ser-70, Phe-154–Asp-157, Lys-177, and His-182–Arg-183.

It belongs to the HAM1 NTPase family. Homodimer. Mg(2+) is required as a cofactor.

The enzyme catalyses XTP + H2O = XMP + diphosphate + H(+). It carries out the reaction dITP + H2O = dIMP + diphosphate + H(+). It catalyses the reaction ITP + H2O = IMP + diphosphate + H(+). In terms of biological role, pyrophosphatase that catalyzes the hydrolysis of nucleoside triphosphates to their monophosphate derivatives, with a high preference for the non-canonical purine nucleotides XTP (xanthosine triphosphate), dITP (deoxyinosine triphosphate) and ITP. Seems to function as a house-cleaning enzyme that removes non-canonical purine nucleotides from the nucleotide pool, thus preventing their incorporation into DNA/RNA and avoiding chromosomal lesions. The sequence is that of dITP/XTP pyrophosphatase (rdgB) from Shigella flexneri.